We begin with the raw amino-acid sequence, 441 residues long: Proline--tRNA ligase (441 aa).

The protein belongs to the class-II aminoacyl-tRNA synthetase family. ProS type 2 subfamily. As to quaternary structure, homodimer.

It is found in the cytoplasm. The enzyme catalyses tRNA(Pro) + L-proline + ATP = L-prolyl-tRNA(Pro) + AMP + diphosphate. Catalyzes the attachment of proline to tRNA(Pro) in a two-step reaction: proline is first activated by ATP to form Pro-AMP and then transferred to the acceptor end of tRNA(Pro). The protein is Proline--tRNA ligase of Bartonella bacilliformis (strain ATCC 35685 / KC583 / Herrer 020/F12,63).